Here is a 66-residue protein sequence, read N- to C-terminus: Phylloseptin-H9 (66 aa).

The signal sequence occupies residues 1-22; that stretch reads MAFLKKSLFLVLFLGLVSLSIC. The propeptide occupies 23-44; that stretch reads EEEKRETEEEENDQEEDDKSEE. The disordered stretch occupies residues 24–44; it reads EEKRETEEEENDQEEDDKSEE. The segment covering 30 to 41 has biased composition (acidic residues); the sequence is EEEENDQEEDDK. Leu-65 carries the leucine amide modification.

In terms of tissue distribution, expressed by the skin glands.

The protein localises to the secreted. Has antimicrobial activity. In Pithecopus hypochondrialis (Orange-legged leaf frog), this protein is Phylloseptin-H9.